Reading from the N-terminus, the 343-residue chain is SH2 domain-containing adapter protein D (343 aa).

The segment at 1-176 (MAKWLRDYLN…PADEYDQPWE (176 aa)) is disordered. 2 stretches are compositionally biased toward basic and acidic residues: residues 29–40 (DILRAYREQKDL) and 73–82 (IKVEAADMAR). Residues 92-102 (EEPEAETEYSD) show a composition bias toward acidic residues. Residues 160 to 176 (RPLEDERPADEYDQPWE) are compositionally biased toward basic and acidic residues. Residues 225-320 (WFHGPLSRAE…AEHLALLYPV (96 aa)) enclose the SH2 domain. The interval 322–343 (SSQSSQGPCTLAAKPERGQGDP) is disordered.

Tyrosine phosphorylated by ABL. Specifically expressed in brain.

Its function is as follows. May function as an adapter protein. The protein is SH2 domain-containing adapter protein D (Shd) of Mus musculus (Mouse).